A 271-amino-acid chain; its full sequence is Ribosomal RNA small subunit methyltransferase A (271 aa).

S-adenosyl-L-methionine is bound by residues histidine 11, leucine 13, glycine 38, glutamate 58, aspartate 86, and asparagine 101.

This sequence belongs to the class I-like SAM-binding methyltransferase superfamily. rRNA adenine N(6)-methyltransferase family. RsmA subfamily.

It localises to the cytoplasm. The enzyme catalyses adenosine(1518)/adenosine(1519) in 16S rRNA + 4 S-adenosyl-L-methionine = N(6)-dimethyladenosine(1518)/N(6)-dimethyladenosine(1519) in 16S rRNA + 4 S-adenosyl-L-homocysteine + 4 H(+). Specifically dimethylates two adjacent adenosines (A1518 and A1519) in the loop of a conserved hairpin near the 3'-end of 16S rRNA in the 30S particle. May play a critical role in biogenesis of 30S subunits. This Helicobacter pylori (strain G27) protein is Ribosomal RNA small subunit methyltransferase A.